The primary structure comprises 219 residues: Hemolysin-3 (219 aa).

A run of 7 helical transmembrane segments spans residues 19-39 (AITHGIGAILSIPALIILIIH), 49-69 (VVAFTVYGVSMFLLYLFSTLL), 83-103 (ILDHSAIYLLIAGTYTPFLLI), 112-132 (TLLAIIWTLAIGGIIFKIFFV), 138-158 (ASTLCYIIMGWLIIVAIKPLY), 165-185 (GFSLLLAGGILYSVGAIFFLW), and 194-214 (IWHLFVLGGSAMMFFCVLFYV).

The protein belongs to the UPF0073 (Hly-III) family.

It localises to the cell membrane. Functionally, might be virulent against a mammalian host; when expressed in E.coli, the soluble extract has hemolytic activity on human erythrocytes. The activity is not inhibited by cholesterol or activated by 2-mercaptoethanol. Might be pore-forming protein. Its in vivo role in virulence is untested, nor has it been shown to be secreted by B.cereus. In Bacillus cereus, this protein is Hemolysin-3.